The sequence spans 1571 residues: MTSVEKVSILGAETIHVGYGIQDHIVQEVISHLASSTYVIVTDTNMARTTPFTKLRNKFESKLKELRPESRLLFYSVSPGENNKNRETKAAVEDFLLQQGCTRDTVILAVGGGVIGDMIGFVAATFMRGVRVVQVPTSLLAMVDSSVGGKTAIDTPLGKNFVGAFHQPEYVFADVSFLETLPTRQFINGMAEVVKTAAIWNEEEFTRLEKFSKKFLAVVSAKTPDLISIKEELVKTVLESIRVKAFVVSSDEKETGLRNLLNFGHTIGHAIEAVLTPQALHGECVSIGMIKEAELARYLGVLSPVAVARLSKCLVAYGLPVSIDEKDFLKKVGNKRHNVEIDILLKKMAIDKKNDGSKIRCVILEAIGKCYQLKAHQVSKQDLSFVLTDEVLVHPFDDKLIPKTNVVIPPGSKSISNRALVLAALGTGTVRIKNLLHSDDTKHMLEAVASLKGASISTEDNGETIVVTGNGGKLVSCDEQLYLGNAGTASRFLTSVAPLVGINPQSGEHVVLTGNARMQERPIGPLVDALRANGSEIDYLNKEGSLPLKVKAGKGLNGGRIELAATISSQYVSSILMCAPYANEPVTLSLVGGKPISQLYINMTIAMMKTFGIVVTKSETEEHTYHIPRGSYVNPKEYVIESDASSATYPLAFAALTGTSCTIPNIGSSSLQGDARFAVDVLRPMGCEVVQTATSTTVTGPSVGNLKPLPHVDMEPMTDAFLTASVVAAVAKNGTQSTSITGIANQRVKECNRIAAMVSELAKFGVVANELPDGIEIHGISPNDLVTPSTEKRGIKTFDDHRVAMSFSLLAGLCKDKVLIQERSCTGKTWPGWWDILHTKFKVAIDGYELPLQHEDSTALVEKHGNGKRSIIVIGMRGAGKSTLSKWMASFLGFKLVDLDDVLEEKIGTDIRSFVQQQGWEEFRKQEAIVAKESFIKFSEGCVLSTGGGIVEGEEARESLKSYVKSGGIVLHLHRDLDETVVLLSADTTRPAYVDEIKQVWLRRENWYRECSNYHFYSAHCSSDAEFKHLRNSFTTYIKTITGFHVAQIPKKRSFYTSLTFSDLTEVASSLEDISTGSDAIELRVDLLKETTHTFVADQTAILRKSTNLPIIYTIRTESQGGKFPDNKFEELEELLALGIKLGVQYLDLQLDLPNDLLERILESKKFTKIIASYVDVSGSLRWDNVEWKNRYNQGVSLGADLVKLVGRANSFQDNLSLEVFRGTSTLKPLIAYNVGEKGKLSRVLNPRLTPVTHAKIPAESGNEGALDVAQINKAYTDIGGLSEKHFWIVGNPVGHSRSPNLHNAGYKKLNLPYVFDRFETSDAGEAFQKLIKEDKNFGGLAVTMPLKVDIMKYTDKLSDSAQVIGAVNTVIELEGEQGKYLGENTDWVGISESFVRDGIPNLENVNVNGLVVGGGGTSRAAVYALHQLGCKKIYMLNRTVSKIQEIQKNFPAEYNIEILDSVEAVEAAQPISLIVSCIPADKPIDEQLLNKLERVLYVGGEAKIGGFTPSLLEASYKPRVTPIMKIASEKYEWNVIPGVEMLVNQGITQFQLHTGFVAPYDVVHDAVVNQ.

The interval 1–380 is 3-dehydroquinate synthase; sequence MTSVEKVSIL…YQLKAHQVSK (380 aa). NAD(+) contacts are provided by residues 43–45, 81–84, 112–114, and aspartate 117; these read DTN, ENNK, and GGV. Arginine 128 serves as a coordination point for 7-phospho-2-dehydro-3-deoxy-D-arabino-heptonate. NAD(+) is bound at residue 137-138; the sequence is TS. 7-phospho-2-dehydro-3-deoxy-D-arabino-heptonate contacts are provided by aspartate 144 and lysine 150. Residue lysine 159 coordinates NAD(+). Asparagine 160 provides a ligand contact to 7-phospho-2-dehydro-3-deoxy-D-arabino-heptonate. NAD(+) contacts are provided by residues 177–180 and asparagine 188; that span reads FLET. Glutamate 192 lines the Zn(2+) pocket. Residues 192-195 and lysine 244 each bind 7-phospho-2-dehydro-3-deoxy-D-arabino-heptonate; that span reads EVVK. The active-site Proton acceptor; for 3-dehydroquinate synthase activity is the glutamate 254. Residues 258 to 262 and histidine 265 each bind 7-phospho-2-dehydro-3-deoxy-D-arabino-heptonate; that span reads RNLLN. Histidine 265 lines the Zn(2+) pocket. Histidine 269 serves as the catalytic Proton acceptor; for 3-dehydroquinate synthase activity. Positions 281 and 352 each coordinate 7-phospho-2-dehydro-3-deoxy-D-arabino-heptonate. A Zn(2+)-binding site is contributed by histidine 281. The interval 393–843 is EPSP synthase; that stretch reads VHPFDDKLIP…WDILHTKFKV (451 aa). Cysteine 825 functions as the For EPSP synthase activity in the catalytic mechanism. A shikimate kinase region spans residues 868-1058; that stretch reads KRSIIVIGMR…IPKKRSFYTS (191 aa). 875–882 lines the ATP pocket; the sequence is GMRGAGKS. Residues 1059-1271 are 3-dehydroquinase; it reads LTFSDLTEVA…GNEGALDVAQ (213 aa). Lysine 1204 (schiff-base intermediate with substrate; for 3-dehydroquinate dehydratase activity) is an active-site residue. Residues 1284–1571 form a shikimate dehydrogenase region; sequence EKHFWIVGNP…DVVHDAVVNQ (288 aa).

The protein in the N-terminal section; belongs to the sugar phosphate cyclases superfamily. Dehydroquinate synthase family. It in the 2nd section; belongs to the EPSP synthase family. This sequence in the 3rd section; belongs to the shikimate kinase family. In the 4th section; belongs to the type-I 3-dehydroquinase family. The protein in the C-terminal section; belongs to the shikimate dehydrogenase family. Homodimer. Requires Zn(2+) as cofactor.

The protein localises to the cytoplasm. It carries out the reaction 7-phospho-2-dehydro-3-deoxy-D-arabino-heptonate = 3-dehydroquinate + phosphate. The enzyme catalyses 3-dehydroquinate = 3-dehydroshikimate + H2O. The catalysed reaction is shikimate + NADP(+) = 3-dehydroshikimate + NADPH + H(+). It catalyses the reaction shikimate + ATP = 3-phosphoshikimate + ADP + H(+). It carries out the reaction 3-phosphoshikimate + phosphoenolpyruvate = 5-O-(1-carboxyvinyl)-3-phosphoshikimate + phosphate. The protein operates within metabolic intermediate biosynthesis; chorismate biosynthesis; chorismate from D-erythrose 4-phosphate and phosphoenolpyruvate: step 2/7. It functions in the pathway metabolic intermediate biosynthesis; chorismate biosynthesis; chorismate from D-erythrose 4-phosphate and phosphoenolpyruvate: step 3/7. It participates in metabolic intermediate biosynthesis; chorismate biosynthesis; chorismate from D-erythrose 4-phosphate and phosphoenolpyruvate: step 4/7. Its pathway is metabolic intermediate biosynthesis; chorismate biosynthesis; chorismate from D-erythrose 4-phosphate and phosphoenolpyruvate: step 5/7. The protein operates within metabolic intermediate biosynthesis; chorismate biosynthesis; chorismate from D-erythrose 4-phosphate and phosphoenolpyruvate: step 6/7. In terms of biological role, the AROM polypeptide catalyzes 5 consecutive enzymatic reactions in prechorismate polyaromatic amino acid biosynthesis. The protein is Pentafunctional AROM polypeptide of Scheffersomyces stipitis (strain ATCC 58785 / CBS 6054 / NBRC 10063 / NRRL Y-11545) (Yeast).